A 466-amino-acid polypeptide reads, in one-letter code: Acetylcholine-gated chloride channel subunit acc-1 (466 aa).

The signal sequence occupies residues 1–24; it reads MSHPGWIMVSFLTELLSQSSKGIA. Residues 25 to 242 are Extracellular-facing; sequence QSLDNCANDT…FVFERRYGWY (218 aa). Asparagine 32, asparagine 102, and asparagine 143 each carry an N-linked (GlcNAc...) asparagine glycan. An intrachain disulfide couples cysteine 158 to cysteine 172. A glycan (N-linked (GlcNAc...) asparagine) is linked at asparagine 211. A helical transmembrane segment spans residues 243-263; that stretch reads VLQGYIPTMVTIVISWISFYL. Over 264–272 the chain is Cytoplasmic; it reads GPRAIPART. The helical transmembrane segment at 273 to 290 threads the bilayer; the sequence is MLGVNSLLAMTFQFGNII. Residues 291-304 lie on the Extracellular side of the membrane; sequence RNLPRVSYVKAIDV. A helical transmembrane segment spans residues 305–325; that stretch reads WMLSGMLFIFLSLLELAVVGF. Topologically, residues 326-427 are cytoplasmic; that stretch reads MSRNEGLPPK…MRELRPETVD (102 aa). Residues 333–352 are disordered; sequence PPKVKKRKRQEDDDEGFSWK. A helical membrane pass occupies residues 428–448; the sequence is FYSAIFFPTAYMLFNISYWSF. The Extracellular portion of the chain corresponds to 449 to 466; it reads YLTSLSEYFDEDVNIDQP.

It belongs to the ligand-gated ion channel (TC 1.A.9) family. In terms of assembly, homopentamer (in vitro). Forms heteropentamers composed of acc-1 and acc-4 or acc-1 and acc-3. Both homopentamers and heteropentamers form functional ion channels. Expressed in a subset of cholinergic motor neurons including cholinergic motor neurons in the ventral cord, the retrovesicular ganglion and in head neurons such as the SMD, RMD motor neurons, the AVA and AVE command interneurons and the SAA neurons. Also expressed in a small number of glutamatergic neurons including the pharyngeal neurons MI and M3, the PLM neurons and a pair of neurons in the lateral ganglion.

It is found in the cell membrane. Acetylcholine-gated chloride channel subunit. Forms functional homopentameric (in vitro) and functional heteropentameric ion channels with acc-3 and acc-4 ion channel subunits. Currents in channels are triggered in response to acetylcholine, but not in response to GABA, glutamate, glycine, histamine or dopamine. The sequence is that of Acetylcholine-gated chloride channel subunit acc-1 from Caenorhabditis elegans.